We begin with the raw amino-acid sequence, 126 residues long: Large ribosomal subunit protein bL12 (126 aa).

The protein belongs to the bacterial ribosomal protein bL12 family. As to quaternary structure, homodimer. Part of the ribosomal stalk of the 50S ribosomal subunit. Forms a multimeric L10(L12)X complex, where L10 forms an elongated spine to which 2 to 4 L12 dimers bind in a sequential fashion. Binds GTP-bound translation factors.

Forms part of the ribosomal stalk which helps the ribosome interact with GTP-bound translation factors. Is thus essential for accurate translation. The chain is Large ribosomal subunit protein bL12 from Paracidovorax citrulli (strain AAC00-1) (Acidovorax citrulli).